Reading from the N-terminus, the 192-residue chain is Thiol-disulfide oxidoreductase ResA (192 aa).

A helical; Signal-anchor for type II membrane protein membrane pass occupies residues 22–41; it reads SSILLILVAAVVFAIVSNMK. A Thioredoxin domain is found at 47 to 189; that stretch reads YRVGDAAPDF…LEGYLNDIAP (143 aa). Residues Cys-89 and Cys-92 are joined by a disulfide bond.

It belongs to the thioredoxin family. ResA subfamily.

The protein localises to the cell membrane. It functions in the pathway protein modification; cytochrome c assembly. Its function is as follows. Thiol-disulfide oxidoreductase which is required in disulfide reduction during c-type cytochrome synthesis. May accept reducing equivalents from CcdA, leading to breakage of disulfide bonds in apocytochrome c; following this reduction heme can be covalently attached. The protein is Thiol-disulfide oxidoreductase ResA of Oceanobacillus iheyensis (strain DSM 14371 / CIP 107618 / JCM 11309 / KCTC 3954 / HTE831).